Reading from the N-terminus, the 204-residue chain is Paraneoplastic antigen-like protein 8C (204 aa).

The interval 135–204 (PPATGPRELP…RRHHASDKKL (70 aa)) is disordered. Residues 182–204 (VGKRGKRKNKKNRRRHHASDKKL) show a composition bias toward basic residues.

This sequence belongs to the PNMA family.

In Homo sapiens (Human), this protein is Paraneoplastic antigen-like protein 8C.